A 334-amino-acid chain; its full sequence is Protein OPG181 (334 aa).

Belongs to the orthopoxvirus OPG181 family.

The chain is Protein OPG181 (OPG181) from Bos taurus (Bovine).